The sequence spans 573 residues: 60 kDa heat shock protein, mitochondrial (573 aa).

Residues 1–26 (MLRLPTVLRQMRPVSRALAPHLTRAY) constitute a mitochondrion transit peptide. An N6-succinyllysine modification is found at K31. Phosphoserine is present on residues S67 and S70. An ATP-binding site is contributed by K75. K75 carries the post-translational modification N6-acetyllysine. N6-acetyllysine; alternate is present on K82. K82 is modified (N6-succinyllysine; alternate). K87 carries the post-translational modification N6-acetyllysine. Residue Y90 is modified to Phosphotyrosine. N6-acetyllysine is present on K91. Position 111–115 (111–115 (DGTTT)) interacts with ATP. Position 125 is an N6-acetyllysine; alternate (K125). The residue at position 125 (K125) is an N6-succinyllysine; alternate. An N6-acetyllysine modification is found at K130. Position 133 is an N6-acetyllysine; alternate (K133). An N6-succinyllysine; alternate modification is found at K133. Residue K133 is modified to N6-malonyllysine; alternate. K156 is modified (N6-acetyllysine). Residues K191, K202, K205, K218, and K236 each carry the N6-acetyllysine; alternate modification. N6-succinyllysine; alternate is present on residues K191, K202, K205, K218, and K236. An N6-acetyllysine modification is found at K249. N6-acetyllysine; alternate is present on K250. K250 carries the post-translational modification N6-succinyllysine; alternate. N6-acetyllysine is present on residues K269 and K292. Position 301 is an N6-succinyllysine (K301). An N6-acetyllysine modification is found at K314. Position 352 is an N6-acetyllysine; alternate (K352). N6-succinyllysine; alternate is present on K352. K359 and K389 each carry N6-acetyllysine. At K396 the chain carries N6-acetyllysine; alternate. K396 bears the N6-succinyllysine; alternate mark. S410 carries the post-translational modification Phosphoserine. G440 contributes to the ATP binding site. N6-acetyllysine; alternate is present on K455. Position 455 is an N6-succinyllysine; alternate (K455). The residue at position 469 (K469) is an N6-acetyllysine. The residue at position 481 (K481) is an N6-acetyllysine; alternate. Position 481 is an N6-succinyllysine; alternate (K481). S488 carries the post-translational modification Phosphoserine. D520 serves as a coordination point for ATP. Residue K551 forms a Glycyl lysine isopeptide (Lys-Gly) (interchain with G-Cter in SUMO2) linkage.

Belongs to the chaperonin (HSP60) family. Homoheptamer arranged in a ring structure. The functional units of these chaperonins consist of heptameric rings of the large subunit Hsp60, which function as a back-to-back double ring. Interacts with 2 heptameric Hsp10 rings to form the symmetrical football complex. Interacts with HRAS. Interacts with ATAD3A. Interacts with ETFBKMT and EEF1AKMT3. Interacts with MFHAS1.

The protein resides in the mitochondrion matrix. The enzyme catalyses ATP + H2O + a folded polypeptide = ADP + phosphate + an unfolded polypeptide.. Chaperonin implicated in mitochondrial protein import and macromolecular assembly. Together with Hsp10, facilitates the correct folding of imported proteins. May also prevent misfolding and promote the refolding and proper assembly of unfolded polypeptides generated under stress conditions in the mitochondrial matrix. The functional units of these chaperonins consist of heptameric rings of the large subunit Hsp60, which function as a back-to-back double ring. In a cyclic reaction, Hsp60 ring complexes bind one unfolded substrate protein per ring, followed by the binding of ATP and association with 2 heptameric rings of the co-chaperonin Hsp10. This leads to sequestration of the substrate protein in the inner cavity of Hsp60 where, for a certain period of time, it can fold undisturbed by other cell components. Synchronous hydrolysis of ATP in all Hsp60 subunits results in the dissociation of the chaperonin rings and the release of ADP and the folded substrate protein. This chain is 60 kDa heat shock protein, mitochondrial (Hspd1), found in Rattus norvegicus (Rat).